The chain runs to 78 residues: Short neurotoxin OH-5 (78 aa).

Positions 1 to 21 are cleaved as a signal peptide; the sequence is MKNLLLTFLVVTIVCLDLGYT. 4 disulfide bridges follow: Cys-24–Cys-40, Cys-33–Cys-58, Cys-62–Cys-70, and Cys-71–Cys-76.

This sequence belongs to the three-finger toxin family. Short-chain subfamily. As to expression, expressed by the venom gland.

The protein localises to the secreted. This three-finger toxin binds and inhibits the nicotinic acetylcholine receptor (nAChR). The sequence is that of Short neurotoxin OH-5 from Ophiophagus hannah (King cobra).